The following is an 83-amino-acid chain: Small ribosomal subunit protein uS17c (83 aa).

It belongs to the universal ribosomal protein uS17 family. Part of the 30S ribosomal subunit.

It is found in the plastid. The protein localises to the chloroplast. Functionally, one of the primary rRNA binding proteins, it binds specifically to the 5'-end of 16S ribosomal RNA. This chain is Small ribosomal subunit protein uS17c (rps17), found in Porphyra purpurea (Red seaweed).